Reading from the N-terminus, the 538-residue chain is NADH-quinone oxidoreductase subunit N (538 aa).

The next 14 helical transmembrane spans lie at 12–32 (IAYG…VSVL), 47–67 (LALA…LSGS), 81–101 (PTLY…VVMA), 144–164 (GITQ…MMLF), 170–190 (LLTM…MCAL), 205–225 (YFLL…FVYG), 248–268 (FLLL…GAVP), 294–314 (IAAF…ITTD), 317–337 (PVLW…AVTQ), 343–363 (MLAY…AAAN), 371–391 (LFYL…AGLV), 423–443 (APVL…IPLT), 472–492 (SAIA…ADPV), and 502–522 (GPAV…LGVA).

Belongs to the complex I subunit 2 family. In terms of assembly, NDH-1 is composed of 14 different subunits. Subunits NuoA, H, J, K, L, M, N constitute the membrane sector of the complex.

It localises to the cell membrane. The catalysed reaction is a quinone + NADH + 5 H(+)(in) = a quinol + NAD(+) + 4 H(+)(out). Its function is as follows. NDH-1 shuttles electrons from NADH, via FMN and iron-sulfur (Fe-S) centers, to quinones in the respiratory chain. The immediate electron acceptor for the enzyme in this species is believed to be a menaquinone. Couples the redox reaction to proton translocation (for every two electrons transferred, four hydrogen ions are translocated across the cytoplasmic membrane), and thus conserves the redox energy in a proton gradient. This Mycobacteroides abscessus (strain ATCC 19977 / DSM 44196 / CCUG 20993 / CIP 104536 / JCM 13569 / NCTC 13031 / TMC 1543 / L948) (Mycobacterium abscessus) protein is NADH-quinone oxidoreductase subunit N.